The chain runs to 311 residues: Malate dehydrogenase (311 aa).

Residues 7–13 and Asp-34 contribute to the NAD(+) site; that span reads GAAGGIG. Positions 81 and 87 each coordinate substrate. NAD(+)-binding positions include Asn-94 and 117 to 119; that span reads ITN. Residues Asn-119 and Arg-153 each contribute to the substrate site. His-177 serves as the catalytic Proton acceptor. Residue Met-227 coordinates NAD(+).

It belongs to the LDH/MDH superfamily. MDH type 1 family. As to quaternary structure, homodimer.

It carries out the reaction (S)-malate + NAD(+) = oxaloacetate + NADH + H(+). Functionally, catalyzes the reversible oxidation of malate to oxaloacetate. The protein is Malate dehydrogenase of Yersinia enterocolitica serotype O:8 / biotype 1B (strain NCTC 13174 / 8081).